The following is a 612-amino-acid chain: Peroxisomal carnitine O-octanoyltransferase (612 aa).

M1 is subject to N-acetylmethionine. An N6-succinyllysine mark is found at K40 and K57. H327 serves as the catalytic Proton acceptor. Residues K406 and 410–417 (KKEALHPD) each bind CoA. The residue at position 406 (K406) is an N6-acetyllysine; alternate. Residue K406 is modified to N6-succinyllysine; alternate. 3 residues coordinate (R)-carnitine: Y439, T441, and T452. The Microbody targeting signal motif lies at 610–612 (AHL).

This sequence belongs to the carnitine/choline acetyltransferase family. As to expression, liver.

It localises to the peroxisome. It catalyses the reaction octanoyl-CoA + (R)-carnitine = O-octanoyl-(R)-carnitine + CoA. The catalysed reaction is 4,8-dimethylnonanoyl-CoA + (R)-carnitine = O-4,8-dimethylnonanoyl-(R)-carnitine + CoA. It participates in lipid metabolism; fatty acid beta-oxidation. Its function is as follows. Beta-oxidation of fatty acids. The highest activity concerns the C6 to C10 chain length substrate. The protein is Peroxisomal carnitine O-octanoyltransferase (Crot) of Rattus norvegicus (Rat).